A 110-amino-acid chain; its full sequence is Nucleoid-associated protein KPN78578_04440 (110 aa).

Belongs to the YbaB/EbfC family. As to quaternary structure, homodimer.

It is found in the cytoplasm. The protein resides in the nucleoid. Its function is as follows. Binds to DNA and alters its conformation. May be involved in regulation of gene expression, nucleoid organization and DNA protection. This chain is Nucleoid-associated protein KPN78578_04440, found in Klebsiella pneumoniae subsp. pneumoniae (strain ATCC 700721 / MGH 78578).